The chain runs to 228 residues: Outer membrane protein assembly factor BamE (228 aa).

Positions 1 to 29 (MNPILKGVYSPARLGVVALTLFGILGVTG) are cleaved as a signal peptide. The N-palmitoyl cysteine moiety is linked to residue C30. A lipid anchor (S-diacylglycerol cysteine) is attached at C30. The interval 197-228 (DFFGSSKKDPDPQSPQLGPGTLNDVPKPADSK) is disordered.

This sequence belongs to the BamE family. In terms of assembly, part of the Bam complex.

The protein resides in the cell outer membrane. Functionally, part of the outer membrane protein assembly complex, which is involved in assembly and insertion of beta-barrel proteins into the outer membrane. This Polynucleobacter necessarius subsp. necessarius (strain STIR1) protein is Outer membrane protein assembly factor BamE.